Here is a 112-residue protein sequence, read N- to C-terminus: Notch-regulated ankyrin repeat-containing protein A (112 aa).

ANK repeat units follow at residues Glu48–Leu77 and Glu81–Gly110.

The protein belongs to the NRARP family.

Regulates independently canonical Wnt and Notch signaling by modulating LEF1 and Notch protein turnover. Stabilizes LEF1, a pivotal transcription factor in the Wnt signaling cascade, by blocking its ubiquitination. Involved in angiogenesis; involved in intersegmental vessel patterning during development. The polypeptide is Notch-regulated ankyrin repeat-containing protein A (nrarpa) (Danio rerio (Zebrafish)).